The chain runs to 425 residues: Serine--tRNA ligase 2 (425 aa).

230–232 (TAE) provides a ligand contact to L-serine. 261 to 263 (REE) contacts ATP. Residue Glu-284 coordinates L-serine. Residue 348–351 (EISS) participates in ATP binding. Position 383 (Ser-383) interacts with L-serine.

Belongs to the class-II aminoacyl-tRNA synthetase family. Type-1 seryl-tRNA synthetase subfamily. Homodimer. The tRNA molecule binds across the dimer.

The protein resides in the cytoplasm. It catalyses the reaction tRNA(Ser) + L-serine + ATP = L-seryl-tRNA(Ser) + AMP + diphosphate + H(+). The catalysed reaction is tRNA(Sec) + L-serine + ATP = L-seryl-tRNA(Sec) + AMP + diphosphate + H(+). The protein operates within aminoacyl-tRNA biosynthesis; selenocysteinyl-tRNA(Sec) biosynthesis; L-seryl-tRNA(Sec) from L-serine and tRNA(Sec): step 1/1. Catalyzes the attachment of serine to tRNA(Ser). Is also able to aminoacylate tRNA(Sec) with serine, to form the misacylated tRNA L-seryl-tRNA(Sec), which will be further converted into selenocysteinyl-tRNA(Sec). The protein is Serine--tRNA ligase 2 of Lactiplantibacillus plantarum (strain ATCC BAA-793 / NCIMB 8826 / WCFS1) (Lactobacillus plantarum).